A 129-amino-acid chain; its full sequence is Large ribosomal subunit protein bL20 (129 aa).

It belongs to the bacterial ribosomal protein bL20 family.

Binds directly to 23S ribosomal RNA and is necessary for the in vitro assembly process of the 50S ribosomal subunit. It is not involved in the protein synthesizing functions of that subunit. This is Large ribosomal subunit protein bL20 from Mycobacterium leprae (strain Br4923).